The following is a 362-amino-acid chain: UDP-N-acetylglucosamine--N-acetylmuramyl-(pentapeptide) pyrophosphoryl-undecaprenol N-acetylglucosamine transferase (362 aa).

Residues Thr-10–Gly-12, Asn-124, Arg-161, Ser-195, and Gln-291 each bind UDP-N-acetyl-alpha-D-glucosamine.

The protein belongs to the glycosyltransferase 28 family. MurG subfamily.

It is found in the cell membrane. The enzyme catalyses di-trans,octa-cis-undecaprenyl diphospho-N-acetyl-alpha-D-muramoyl-L-alanyl-D-glutamyl-meso-2,6-diaminopimeloyl-D-alanyl-D-alanine + UDP-N-acetyl-alpha-D-glucosamine = di-trans,octa-cis-undecaprenyl diphospho-[N-acetyl-alpha-D-glucosaminyl-(1-&gt;4)]-N-acetyl-alpha-D-muramoyl-L-alanyl-D-glutamyl-meso-2,6-diaminopimeloyl-D-alanyl-D-alanine + UDP + H(+). It functions in the pathway cell wall biogenesis; peptidoglycan biosynthesis. In terms of biological role, cell wall formation. Catalyzes the transfer of a GlcNAc subunit on undecaprenyl-pyrophosphoryl-MurNAc-pentapeptide (lipid intermediate I) to form undecaprenyl-pyrophosphoryl-MurNAc-(pentapeptide)GlcNAc (lipid intermediate II). The sequence is that of UDP-N-acetylglucosamine--N-acetylmuramyl-(pentapeptide) pyrophosphoryl-undecaprenol N-acetylglucosamine transferase from Streptomyces collinus.